Reading from the N-terminus, the 968-residue chain is RNA polymerase-associated protein RapA (968 aa).

Positions 163 to 332 (EVGSRYAPRV…FARLRLLDPD (170 aa)) constitute a Helicase ATP-binding domain. 176–183 (DEVGLGKT) serves as a coordination point for ATP. A DEAH box motif is present at residues 278 to 281 (DEAH). A Helicase C-terminal domain is found at 491–655 (RVDWLIEFLK…EFADELINVL (165 aa)).

It belongs to the SNF2/RAD54 helicase family. RapA subfamily. As to quaternary structure, interacts with the RNAP. Has a higher affinity for the core RNAP than for the holoenzyme. Its ATPase activity is stimulated by binding to RNAP.

Its function is as follows. Transcription regulator that activates transcription by stimulating RNA polymerase (RNAP) recycling in case of stress conditions such as supercoiled DNA or high salt concentrations. Probably acts by releasing the RNAP, when it is trapped or immobilized on tightly supercoiled DNA. Does not activate transcription on linear DNA. Probably not involved in DNA repair. This chain is RNA polymerase-associated protein RapA, found in Shewanella frigidimarina (strain NCIMB 400).